The primary structure comprises 262 residues: Thiazole synthase (262 aa).

Catalysis depends on Lys-104, which acts as the Schiff-base intermediate with DXP. 1-deoxy-D-xylulose 5-phosphate contacts are provided by residues Gly-165, 191-192 (AG), and 213-214 (NT).

Belongs to the ThiG family. Homotetramer. Forms heterodimers with either ThiH or ThiS.

It is found in the cytoplasm. It catalyses the reaction [ThiS sulfur-carrier protein]-C-terminal-Gly-aminoethanethioate + 2-iminoacetate + 1-deoxy-D-xylulose 5-phosphate = [ThiS sulfur-carrier protein]-C-terminal Gly-Gly + 2-[(2R,5Z)-2-carboxy-4-methylthiazol-5(2H)-ylidene]ethyl phosphate + 2 H2O + H(+). The protein operates within cofactor biosynthesis; thiamine diphosphate biosynthesis. Catalyzes the rearrangement of 1-deoxy-D-xylulose 5-phosphate (DXP) to produce the thiazole phosphate moiety of thiamine. Sulfur is provided by the thiocarboxylate moiety of the carrier protein ThiS. In vitro, sulfur can be provided by H(2)S. The sequence is that of Thiazole synthase from Alkalilimnicola ehrlichii (strain ATCC BAA-1101 / DSM 17681 / MLHE-1).